A 240-amino-acid chain; its full sequence is RNA-free ribonuclease P (240 aa).

Belongs to the HARP family.

The catalysed reaction is Endonucleolytic cleavage of RNA, removing 5'-extranucleotides from tRNA precursor.. Functionally, RNA-free RNase P that catalyzes the removal of the 5'-leader sequence from pre-tRNA to produce the mature 5'-terminus. This chain is RNA-free ribonuclease P, found in Methanococcus aeolicus (strain ATCC BAA-1280 / DSM 17508 / OCM 812 / Nankai-3).